Here is a 357-residue protein sequence, read N- to C-terminus: Malonyl CoA reductase (NADP) (357 aa).

13-16 (TGLV) provides a ligand contact to NADP(+). Cys-150 serves as the catalytic Acyl-thioester intermediate. 180 to 181 (SG) provides a ligand contact to NADP(+). His-245 functions as the Proton acceptor in the catalytic mechanism. 332-333 (NT) serves as a coordination point for NADP(+).

The protein belongs to the aspartate-semialdehyde dehydrogenase family. As to quaternary structure, homotetramer.

The catalysed reaction is 3-oxopropanoate + NADP(+) + CoA = malonyl-CoA + NADPH + H(+). In terms of biological role, catalyzes the reduction of malonyl-CoA to malonate semialdehyde, a key step in the 3-hydroxypropanoate and the 3-hydroxypropanoate/4-hydroxybutyrate cycles. The sequence is that of Malonyl CoA reductase (NADP) from Metallosphaera sedula (strain ATCC 51363 / DSM 5348 / JCM 9185 / NBRC 15509 / TH2).